Reading from the N-terminus, the 265-residue chain is Aquaporin-5 (265 aa).

The Cytoplasmic segment spans residues 1–12; the sequence is MKKEVCSVAFFK. A helical transmembrane segment spans residues 13 to 33; that stretch reads AVFAEFLATLIFVFFGLGSAL. Residues 34-39 lie on the Extracellular side of the membrane; the sequence is KWPSAL. Residues 40 to 60 form a helical membrane-spanning segment; sequence PTILQISIAFGLAIGTLAQAL. Topologically, residues 61–65 are cytoplasmic; sequence GPVSG. The segment at residues 66–74 is an intramembrane region (discontinuously helical); the sequence is GHINPAITL. The short motif at 69–71 is the NPA 1 element; the sequence is NPA. Over 75–87 the chain is Cytoplasmic; that stretch reads ALLIGNQISLLRA. A helical membrane pass occupies residues 88–108; it reads IFYVAAQLVGAIAGAGILYWL. Over 109–126 the chain is Extracellular; the sequence is APGNARGNLAVNALSNNT. A glycan (N-linked (GlcNAc...) asparagine) is linked at Asn124. A helical membrane pass occupies residues 127–147; that stretch reads TPGKAVVVELILTFQLALCIF. The Cytoplasmic segment spans residues 148-158; that stretch reads SSTDSRRTSPV. The helical transmembrane segment at 159–179 threads the bilayer; that stretch reads GSPALSIGLSVTLGHLVGIYF. Thr180 is a topological domain (extracellular). Residues 181–191 constitute an intramembrane region (discontinuously helical); the sequence is GCSMNPARSFG. An NPA 2 motif is present at residues 185–187; the sequence is NPA. Over 192–203 the chain is Extracellular; sequence PAVVMNRFSPSH. Residues 204 to 224 form a helical membrane-spanning segment; that stretch reads WVFWVGPIVGAVLAAILYFYL. Residues 225–265 lie on the Cytoplasmic side of the membrane; the sequence is LFPSSLSLHDRVAVVKGTYEPEEDWEDHREERKKTIELTAH.

It belongs to the MIP/aquaporin (TC 1.A.8) family. In terms of assembly, homotetramer; each monomer provides an independent water pore. Interacts with TRPV4; the interaction is probably indirect and regulates TRPV4 activation by hypotonicity. As to expression, detected at the luminal membrane of secretory epithelial cells in hindpaw sweat glands. Detected in acinar cells in salivary glands, in duct cells in lacrimal glands and in lung (at protein level). Detected in lung, parotid, submandibular, sublingual, and lacrimal gland tissues.

It is found in the apical cell membrane. The protein localises to the cell membrane. Its subcellular location is the cytoplasmic vesicle membrane. The enzyme catalyses H2O(in) = H2O(out). Its function is as follows. Aquaporins form homotetrameric transmembrane channels, with each monomer independently mediating water transport across the plasma membrane along its osmotic gradient. Plays an important role in fluid secretion in salivary glands. Required for TRPV4 activation by hypotonicity. Together with TRPV4, controls regulatory volume decrease in salivary epithelial cells. Seems to play a redundant role in water transport in the eye, lung and in sweat glands. In Mus musculus (Mouse), this protein is Aquaporin-5.